We begin with the raw amino-acid sequence, 167 residues long: HTH-type transcriptional repressor IacR (167 aa).

A compositionally biased stretch (polar residues) spans methionine 1–alanine 10. The tract at residues methionine 1–aspartate 25 is disordered. Residues glutamate 30–histidine 162 enclose the HTH marR-type domain. A DNA-binding region (H-T-H motif) is located at residues isoleucine 76–glutamate 99.

Its activity is regulated as follows. Exposure to indole-3-acetic acid (IAA) probably relieves the repressor activity. Probably acts as a repressor of iacA expression. This Pseudomonas putida (Arthrobacter siderocapsulatus) protein is HTH-type transcriptional repressor IacR.